Consider the following 162-residue polypeptide: 3-isopropylmalate dehydratase small subunit (162 aa).

It belongs to the LeuD family. LeuD type 2 subfamily. In terms of assembly, heterodimer of LeuC and LeuD.

The catalysed reaction is (2R,3S)-3-isopropylmalate = (2S)-2-isopropylmalate. It functions in the pathway amino-acid biosynthesis; L-leucine biosynthesis; L-leucine from 3-methyl-2-oxobutanoate: step 2/4. Its function is as follows. Catalyzes the isomerization between 2-isopropylmalate and 3-isopropylmalate, via the formation of 2-isopropylmaleate. In Pyrobaculum neutrophilum (strain DSM 2338 / JCM 9278 / NBRC 100436 / V24Sta) (Thermoproteus neutrophilus), this protein is 3-isopropylmalate dehydratase small subunit.